Consider the following 1935-residue polypeptide: Myosin-7 (1935 aa).

One can recognise a Myosin N-terminal SH3-like domain in the interval 32–81 (DLKKDVFVPDDKQEFVKAKIVSREGGKVTAETEYGKTVTVKEDQVMQQNP). Residues 85 to 778 (DKIEDMAMLT…LLGLLEEMRD (694 aa)) form the Myosin motor domain. Position 129 is an N6,N6,N6-trimethyllysine (Lys-129). An ATP-binding site is contributed by 178 to 185 (GESGAGKT). Position 378 is a phosphothreonine (Thr-378). Actin-binding stretches follow at residues 655–677 (LNKL…IPNE) and 757–771 (KFGH…GLLG). Positions 781-810 (LSRIITRIQAQSRGVLARMEYKKLLERRDS) constitute an IQ domain. A coiled-coil region spans residues 839 to 1935 (LLKSAEREKE…DIGTKGLNEE (1097 aa)). Ser-1137 and Ser-1269 each carry phosphoserine. Thr-1282 bears the Phosphothreonine mark. Phosphotyrosine is present on Tyr-1308. Phosphothreonine is present on Thr-1309. Phosphoserine is present on Ser-1510. Thr-1513 carries the post-translational modification Phosphothreonine. The segment at 1907–1935 (EERADIAESQVNKLRAKSRDIGTKGLNEE) is disordered. Residues 1923 to 1935 (KSRDIGTKGLNEE) show a composition bias toward basic and acidic residues.

This sequence belongs to the TRAFAC class myosin-kinesin ATPase superfamily. Myosin family. In terms of assembly, muscle myosin is a hexameric protein that consists of 2 heavy chain subunits (MHC), 2 alkali light chain subunits (MLC) and 2 regulatory light chain subunits (MLC-2). Interacts with ECPAS. Interacts (via C-terminus) with LRRC39. In terms of tissue distribution, both wild type and variant Gln-403 are detected in skeletal muscle (at protein level).

The protein localises to the cytoplasm. Its subcellular location is the myofibril. The protein resides in the sarcomere. Functionally, myosins are actin-based motor molecules with ATPase activity essential for muscle contraction. Forms regular bipolar thick filaments that, together with actin thin filaments, constitute the fundamental contractile unit of skeletal and cardiac muscle. The polypeptide is Myosin-7 (MYH7) (Homo sapiens (Human)).